We begin with the raw amino-acid sequence, 413 residues long: Gamma-DL-glutamyl hydrolase (413 aa).

Positions 1-32 (MNTLANWKKFLLVAVIICFLVPIMTKAEIAEA) are cleaved as a signal peptide. 3 consecutive NlpC/P60 domains span residues 33-159 (DTSS…RRIA), 163-287 (ATAD…RRFD), and 291-413 (IPKE…IRVQ). Cys-194 acts as the Nucleophile in catalysis. His-247 serves as the catalytic Proton acceptor. Residue Gln-259 is part of the active site.

Belongs to the peptidase C40 family.

The protein resides in the secreted. Its subcellular location is the cell wall. Its activity is regulated as follows. Inhibited by pretreatment with 1 mM 4-(hydroxymercuri)benzoate, a sulfhydryl inhibitor. Functionally, cleaves, in an endo-type manner, the gamma-glutamyl bond between D-glutamate and L-glutamate of poly-gamma-glutamate (PGA). The sequence is that of Gamma-DL-glutamyl hydrolase (pgdS) from Bacillus subtilis (strain 168).